We begin with the raw amino-acid sequence, 905 residues long: Stonin-2 (905 aa).

3 disordered regions span residues 1-121, 178-205, and 244-263; these read MTTL…HQET, EQTSGQASGADSTDNSSSLQEDEEVEME, and LPPVTSPLKPNTPPSASVIP. Residues 40 to 50 show a composition bias toward low complexity; it reads SSSPDQSESSS. Residues 60-73 are compositionally biased toward basic and acidic residues; it reads SQDHSHSEQDDSSE. Residues 85-94 show a composition bias toward pro residues; the sequence is PGSPEQPPPD. Positions 178-196 are enriched in polar residues; it reads EQTSGQASGADSTDNSSSL. Residues 244–256 show a composition bias toward pro residues; the sequence is LPPVTSPLKPNTP. Position 255 is a phosphothreonine (threonine 255). Phosphoserine occurs at positions 281, 287, and 302. Short sequence motifs (NPF) lie at residues 313-315 and 329-331; these read NPF. One can recognise an SHD domain in the interval 427–560; that stretch reads GWPMMLRIPE…DLPVLSMDLS (134 aa). The 311-residue stretch at 568–878 folds into the MHD domain; it reads EEEITVDVRD…SYQVALGSIW (311 aa). At serine 762 the chain carries Phosphoserine.

The protein belongs to the Stoned B family. In terms of assembly, interacts with the second C2 domain of synaptotagmins SYT1 and SYT2. Interacts with EPS15, EPS15R and ITSN1. Interacts indirectly with the AP-2 adapter complex. Interacts with TOR1A and COPS4; the interaction controls STON2 protein stability. Post-translationally, phosphorylated in vitro by PKD. Neddylated; deneddylated via its interaction with the COP9 signalosome (CSN) complex through TOR1A and COPS4. In terms of processing, ubiquitinated; leading to its degradation. As to expression, ubiquitous.

It is found in the cytoplasm. The protein resides in the membrane. The protein localises to the synapse. It localises to the synaptosome. Its function is as follows. Adapter protein involved in endocytic machinery. Involved in the synaptic vesicle recycling. May facilitate clathrin-coated vesicle uncoating. This is Stonin-2 (STON2) from Homo sapiens (Human).